A 695-amino-acid chain; its full sequence is MNSYQIQNQPYQQIQNTHPSFQQVQPMQVPHLQQQQQHQTMIAQQQHTPPQQHTPPQMNMIQQHTQPMLSQPQISLQMQPPSPILASQQQQQHMQSSPILASSNLTNSNNASQTTLPIITSKLLLKKEPIDQEVVNSTHKTTTTNNKPPKQSKRKEKERLEEEKQTVAQQQQYQPPFIPLASNESNSDNPFKGSHAYGVSTTPYGNSQFNNNNNNNNNNNNNNNNSNNNSNNNNGNNNINNNNNNSNNNNNNNSNNNNNNSNNNNGNNNNNNNNNNNNNNNNHNTNNNNSNSNNNNNNGYQQDKKDDYSMMIWSEVGRKINILIRTTSKATKGTPISTQEIAEAIGASNGVTADLVELIKSINDPTYVRKLPPSSISNTPTMGSQSGGMVYNSSPMLSPSTMSPILQHGNYQMGGDMYFGGNNQFSGDKQSALNNVKNSKGGNTNNSGGGSSSGGTNDTQAKKPARRRKMRYGGTELSCHTCGVTNTPEWRRGPNGAKTLCNACGLAWAKSVKSEKQKELLANSTGVNITEPKKAQKRKKESSDNNNNNNNSSDSNKVLKSDDGSNNTNLTNDDDNGYPSSPNSSNSTSPSSHNINNNNNNNNNNNNNNNNNNNNNNNNNNNNIGNNNNNNINNNNTTNSITTPTTTPFPTTIPAMQIVSQLPVMVPQTQQQPHMSGNIISFQALHQNSGYQHYK.

Disordered stretches follow at residues 82-111, 134-304, and 422-472; these read SPIL…SNNA, VVNS…QQDK, and NNQF…KMRY. Low complexity-rich tracts occupy residues 87 to 111 and 140 to 149; these read SQQQ…SNNA and KTTTTNNKPP. Residues 150 to 174 are a coiled coil; it reads KQSKRKEKERLEEEKQTVAQQQQYQ. Residues 155-165 show a composition bias toward basic and acidic residues; that stretch reads KEKERLEEEKQ. The span at 199 to 209 shows a compositional bias: polar residues; sequence VSTTPYGNSQF. Residues 210–298 are compositionally biased toward low complexity; that stretch reads NNNNNNNNNN…NSNSNNNNNN (89 aa). Polar residues predominate over residues 422-433; sequence NNQFSGDKQSAL. Low complexity predominate over residues 434–446; the sequence is NNVKNSKGGNTNN. The GATA-type zinc-finger motif lies at 479–504; it reads CHTCGVTNTPEWRRGPNGAKTLCNAC. The segment at 523 to 646 is disordered; sequence NSTGVNITEP…TTNSITTPTT (124 aa). 2 stretches are compositionally biased toward low complexity: residues 544-556 and 564-646; these read DNNN…SDSN and GSNN…TPTT.

This chain is GATA zinc finger domain-containing protein 16 (gtaP), found in Dictyostelium discoideum (Social amoeba).